The primary structure comprises 466 residues: Ribulose bisphosphate carboxylase large chain (466 aa).

Lys-5 bears the N6,N6,N6-trimethyllysine mark. The substrate site is built by Asn-114 and Thr-164. Lys-166 acts as the Proton acceptor in catalysis. Lys-168 serves as a coordination point for substrate. Mg(2+) is bound by residues Lys-192, Asp-194, and Glu-195. Lys-192 is modified (N6-carboxylysine). Catalysis depends on His-285, which acts as the Proton acceptor. Residues Arg-286, His-318, and Ser-370 each coordinate substrate.

It belongs to the RuBisCO large chain family. Type I subfamily. As to quaternary structure, heterohexadecamer of 8 large chains and 8 small chains. Mg(2+) serves as cofactor.

It is found in the plastid. Its subcellular location is the chloroplast. It carries out the reaction 2 (2R)-3-phosphoglycerate + 2 H(+) = D-ribulose 1,5-bisphosphate + CO2 + H2O. The catalysed reaction is D-ribulose 1,5-bisphosphate + O2 = 2-phosphoglycolate + (2R)-3-phosphoglycerate + 2 H(+). RuBisCO catalyzes two reactions: the carboxylation of D-ribulose 1,5-bisphosphate, the primary event in carbon dioxide fixation, as well as the oxidative fragmentation of the pentose substrate in the photorespiration process. Both reactions occur simultaneously and in competition at the same active site. The polypeptide is Ribulose bisphosphate carboxylase large chain (Cornus kousa (Kousa dogwood)).